A 1979-amino-acid chain; its full sequence is MDDFAEGGLSLADDILLEDYPYEDDCICTPDFTTDDYVRVTQLYYEGVGMQYKDYAQSEKNLEYDICNIWCSKPLSILQDYCDAIKLYIFWPLLFQHQHSSIISRLHPCVEAIRSRAAEISLKKLQHLELMEDIVDLAKKVANDSFLIEGLLKIGYKIENKILAMEDALNWIKYTGDVTILPKLGSVDNCWPMLSIFFTEYKYHITRVVTENCNLLEEFRRHSCMQCVKQGELMKMRGNEEFSKEKFEIAVIYYTRAIEYRPENHLLYGNRALCFLRMGQFRNALSDGKRAIVLKNTWPKGHYRYCDALCMLGEYDWALQANIKAQKLCKNDPEGIKDLIQQHVKLQKQIEDLQGRTSNKNPIKAFYESRAYIPRNSSAPAFRTSLNFVETERGFRKTKYKMANGGDQNQKVADEALKGDDCDCHPEFLPPPSQPPRHKGKQKSRNNESEKPSFNSEVSLQVDLKSILEKQFSKSSRAAHQDFANIMKMLRSLIQDGYTALLEQRCRSAAQAFTELLNGLDPQKIKQLNLAMINYVLVVYGLAVSLLGIGRPEELSEAENQFKRIIEHYPNEGLDCLAYCGIGKVYLKKNRFLEALNHFEKAKTLISRLPGILTWPTSNVIIEESKPEKVKVMLEKFVEECKFPPVPDAVCCYQKCRGYSKIQIYLTDPDFKGFIRISCCQYCKVEFHMNCWKKLKTTTFNDKIDKDFLQGICLTPDCEGIISKIIIYSSGGQVKCEFEHKVIKEKVPSRPVLKQKCSSLEKLRLKEDKKLKRKIQKQEAKKLAQERMEEDLRESNPPKNEEPEETSDSAQRCQFLDDRILQCIKQNADKIKSVVLNTSTLLKELLSWKVLSTEDYTTCFSSKNFVHEAVDYVIGHLIQEKNRVKTRIFLHVLSELKELDPKLAPWIQRLNSFGLDAIGPFFTRYGASLKELDFHVVTVLWDEKYGHKLGSIEGKQLDYFFEPASAMEARCLIWLLEEHRDKFPALHSALDEFFDIMDSRCTVLRKQDSDEMPFGCIKVKNKGKKKKPKDSKPMLVGSGAASVAPSSEAVTPEDHSRRNSDSAGPFAVPDHLRQDVEEFEALYDQHSSEYVVRNKKLWDINPKQKCSTLYDYFSQLLEEHGPLDMSDRMFSEEYEFFPEETRQILEKAGGLKSFLLGCPRFVVIDNCIALKKVASRLKKKRKKKNMKAKVEDISKTGEYLRVKLPLNPTAREFQPDVKSEALSEDVKSIPGPADSSTLAAEDLKAQLDSDSSSGSASEDSRLEVASPDSPTPLCEDASPSPTPAPEEAKPTYWAQSHLVTGFCTYLPFQGFGITQRPAYINMVPSLSQFTSIYTPLANISSEYPMQRSMPVVPSFVASNRADENAAAYFESPNLNTEHDSGDHMASETQILEDTLGVCVRSQGSAADADPALSEPEGNSEHSGSSDSLWEASLENVSGTTDAPAAPSVAIQVSRSMVHQEVNTEPYEPFETQQGDLSQKEKECHLLREQLKVACENCEQIELRSSQEIKDLEEKLQRHTEENKISKTELDWFLQDLDREIKKWQQEKKEIQERLKALKKKIKKVINTSEMSAQKNDGFDKECEPHPDQSLGFSSALTDEKTKAEESVRKGKELYEESHQRAVAAEVSVLENWKEREVCKLQGVASQSEAYLKSLKLMSSDSATYPDVEYDILSWESFLSTVREEIESKKSQFEEHIKAIKNGSRLSDLSSVQLSEVSFPGCSTIHPQFLSESSGHEDPGLVACVDSMTGAVLNDPYMDSASGCPEEVPELSLGSPTHQPEVTQQLELKGASQVSPSEQSPEADEKLSGQATRSSQSPKKPSNSIIEHLSVIFPCYTSTELAGFIKKVRNKTKNSFSGLTIEEIVEKVTEHIVDEQKKKKPNPGKDKKTSEAHSAASVAKSSQSPPLAAAGPSARTKGQKKDDVPAPDGNSCEICHEIFKSKNMRVLKCGHKFHKGCFKQWLKGQSTCPTCGSSDLLSEE.

Residues 1-230 are interaction with POLG; it reads MDDFAEGGLS…RHSCMQCVKQ (230 aa). TPR repeat units lie at residues 231 to 264 and 266 to 298; these read GELMKMRGNEEFSKEKFEIAVIYYTRAIEYRPEN and LLYGNRALCFLRMGQFRNALSDGKRAIVLKNTW. At Ser-378 the chain carries Phosphoserine. The interval 422 to 457 is disordered; the sequence is CDCHPEFLPPPSQPPRHKGKQKSRNNESEKPSFNSE. 2 TPR repeats span residues 536–572 and 576–609; these read VLVVYGLAVSLLGIGRPEELSEAENQFKRIIEHYPNE and CLAYCGIGKVYLKKNRFLEALNHFEKAKTLISRL. Residues 783-811 form a disordered region; that stretch reads LAQERMEEDLRESNPPKNEEPEETSDSAQ. The residue at position 1009 (Ser-1009) is a Phosphoserine. 7 disordered regions span residues 1021-1067, 1214-1289, 1402-1427, 1574-1601, 1757-1776, 1788-1821, and 1873-1927; these read NKGK…GPFA, QPDV…EEAK, QGSAADADPALSEPEGNSEHSGSSDS, KNDGFDKECEPHPDQSLGFSSALTDEKT, MDSASGCPEEVPELSLGSPT, KGASQVSPSEQSPEADEKLSGQATRSSQSPKKPS, and DEQK…PAPD. Low complexity predominate over residues 1036-1050; it reads VGSGAASVAPSSEAV. Phosphoserine is present on Ser-1060. Residues 1214–1227 show a composition bias toward basic and acidic residues; the sequence is QPDVKSEALSEDVK. A compositionally biased stretch (low complexity) spans 1248-1257; the sequence is DSDSSSGSAS. Residues 1576-1586 are compositionally biased toward basic and acidic residues; sequence DGFDKECEPHP. 2 stretches are compositionally biased toward polar residues: residues 1788–1799 and 1808–1821; these read KGASQVSPSEQS and GQATRSSQSPKKPS. A Phosphoserine modification is found at Ser-1794. Residues 1873–1890 show a composition bias toward basic and acidic residues; the sequence is DEQKKKKPNPGKDKKTSE. The RING-type; atypical zinc finger occupies 1931 to 1971; it reads CEICHEIFKSKNMRVLKCGHKFHKGCFKQWLKGQSTCPTCG.

Interacts (when phosphorylated on Ser-378) with AKT1, AKT2 and AKT3 (when phosphorylated). Interacts with CIT. Interacts with POLG. Interacts with HSP70. Interacts with SMURF2. Phosphorylation on Ser-378 by Akt is required for ubiquitin ligase activity. In terms of processing, proteolytically cleaved into differently sized N- and C-terminal fragments.

The protein localises to the nucleus. The protein resides in the cytoplasm. It localises to the golgi apparatus. The catalysed reaction is S-ubiquitinyl-[E2 ubiquitin-conjugating enzyme]-L-cysteine + [acceptor protein]-L-lysine = [E2 ubiquitin-conjugating enzyme]-L-cysteine + N(6)-ubiquitinyl-[acceptor protein]-L-lysine.. Its pathway is protein modification; protein ubiquitination. In terms of biological role, E3 ubiquitin-protein ligase which catalyzes the formation of 'Lys-48'-polyubiquitin chains. Mediates the ubiquitination and subsequent degradation of phosphorylated Akt (AKT1, AKT2 and AKT3) in the nucleus. Acts as a terminal regulator of Akt signaling after activation; its phosphorylation by Akt, which is a prerequisite for ubiquitin ligase activity, suggests the existence of a regulation mechanism required to control Akt levels after activation. Positively regulates TGFB1-induced epithelial-mesenchymal transition and myofibroblast differentiation by mediating the ubiquitination and subsequent degradation of SMURF2. Regulates neuronal differentiation by regulating actin remodeling and Golgi organization via a signaling cascade involving RHOA, CIT and ROCK. Inhibits cell proliferation. The chain is E3 ubiquitin-protein ligase TTC3 (Ttc3) from Mus musculus (Mouse).